Reading from the N-terminus, the 329-residue chain is MVTKAFVLLAIFAEASAKSCAPNKADVILVFCYPKTIITKIPECPYGWEVHQLALGGLCYNGVHEGGYYQFVIPDLSPKNKSYCGTQSEYKPPIYHFYSHIVSNDTTVIVKNQPVNYSFSCTYHSTYLVNQAAFDQRVATVHVKNGSMGTFESQLSLNFYTNAKFSIKKEAPFVLEASEIGSDLFAGVEAKGLSIRFKVVLNSCWATPSADFMYPLQWQLINKGCPTDETVLVHENGRDHRATFQFNAFRFQNIPKLSKVWLHCETFICDSEKLSCPVTCDKRKRLLRDQTGGVLVVELSLRSRGFSSLYSFSDVLHHLIMMLGICAVL.

The signal sequence occupies residues 1 to 17 (MVTKAFVLLAIFAEASA). The ZP domain maps to 19 to 283 (SCAPNKADVI…LSCPVTCDKR (265 aa)). N-linked (GlcNAc...) asparagine glycans are attached at residues N80, N104, N116, and N145. A disulfide bridge links C204 with C264. Residue G305 is the site of GPI-anchor amidated glycine attachment. Residues 306-329 (FSSLYSFSDVLHHLIMMLGICAVL) constitute a propeptide, removed in mature form.

May form homomeric filament after self-association or heteromeric filament after association with alpha-tectorin. Interacts with CEACAM16. Post-translationally, the presence of a hydrophobic C-terminus preceded by a potential cleavage site strongly suggests that tectorins are synthesized as glycosylphosphatidylinositol-linked, membrane-bound precursors. Tectorins are targeted to the apical surface of the inner ear epithelia by the lipid and proteolytically released into the extracellular compartment.

The protein localises to the cell membrane. It localises to the secreted. The protein resides in the extracellular space. Its subcellular location is the extracellular matrix. One of the major non-collagenous components of the tectorial membrane. The tectorial membrane is an extracellular matrix of the inner ear that covers the neuroepithelium of the cochlea and contacts the stereocilia bundles of specialized sensory hair cells. Sound induces movement of these hair cells relative to the tectorial membrane, deflects the stereocilia and leads to fluctuations in hair-cell membrane potential, transducing sound into electrical signals. In Homo sapiens (Human), this protein is Beta-tectorin (TECTB).